Reading from the N-terminus, the 1214-residue chain is Reverse gyrase (1214 aa).

Residues 1–37 (MKAIYRDMCPNCRGAITDERLAAKNPCDACLDEPISM) form an RG N-terminal-type zinc finger. Zn(2+) is bound by residues Cys-9, Cys-12, Cys-27, and Cys-30. ATP contacts are provided by residues Gln-89 and 106 to 113 (APTGMGKS). One can recognise a Helicase ATP-binding domain in the interval 93 to 252 (VKRIIKGKSF…WEIIKLKKQL (160 aa)). Positions 213–216 (DDVD) match the DEAD box motif. The topoisomerase I stretch occupies residues 635 to 1214 (DLVKSALMIV…YEEILRYVKS (580 aa)). Residues 639–802 (SALMIVESPN…VIKRIEFHEV (164 aa)) form the Toprim domain. A Mg(2+)-binding site is contributed by Glu-645. Residues 719 to 748 (IKRCRDCGHQFVDWEEKGVCPRCGSRNVYD) form an RG C-terminal-type zinc finger. The Zn(2+) site is built by Cys-722, Cys-725, Cys-738, and Cys-741. Asp-771 provides a ligand contact to Mg(2+). In terms of domain architecture, Topo IA-type catalytic spans 818–1212 (NEDRVNAQLV…ELYEEILRYV (395 aa)). The active-site O-(5'-phospho-DNA)-tyrosine intermediate is Tyr-955.

In the N-terminal section; belongs to the DEAD box helicase family. DDVD subfamily. This sequence in the C-terminal section; belongs to the type IA topoisomerase family. In terms of assembly, monomer. Zn(2+) serves as cofactor. The cofactor is Mg(2+).

The protein resides in the cytoplasm. It catalyses the reaction ATP + H2O = ADP + phosphate + H(+). In terms of biological role, modifies the topological state of DNA by introducing positive supercoils in an ATP-dependent process. Increases the linking number in steps of +1. Binds to single-stranded DNA, transiently cleaves and then rejoins the ends, introducing a positive supercoil in the process. The scissile phosphodiester is attacked by the catalytic tyrosine of the enzyme, resulting in the formation of a DNA-(5'-phosphotyrosyl)-enzyme intermediate. Probably involved in rewinding DNA strands in regions of the chromosome that have opened up to allow replication, transcription, DNA repair and/or for DNA protection. This Pyrococcus furiosus (strain ATCC 43587 / DSM 3638 / JCM 8422 / Vc1) protein is Reverse gyrase.